Consider the following 218-residue polypeptide: Tubulin polymerization-promoting protein (218 aa).

A disordered region spans residues 1 to 45 (MADSKAKPTKAANKTPPKSPGDPAKAAKRLSLESEGANEGAAAAP). The mediates interaction with LIMK1 stretch occupies residues 2-115 (ADSKAKPTKA…SCRTITFEQF (114 aa)). A Phosphothreonine modification is found at Thr-15. A phosphoserine mark is found at Ser-19, Ser-31, and Ser-34. Low complexity predominate over residues 33–45 (ESEGANEGAAAAP). 4 residues coordinate Zn(2+): His-60, His-71, Cys-79, and Cys-82. The residue at position 91 (Thr-91) is a Phosphothreonine. Ser-106 carries the post-translational modification Phosphoserine. O-linked (GlcNAc) serine glycosylation occurs at Ser-151. Phosphoserine is present on residues Ser-158 and Ser-159. Positions 165–192 (LTDTSKFTGSHKERFDQSGKGKGKAGRV) are disordered. The segment covering 174–183 (SHKERFDQSG) has biased composition (basic and acidic residues).

This sequence belongs to the TPPP family. In terms of assembly, homodimer. Binds tubulin; binding is inhibited by GTP. Interacts with MAPK1. Interacts with GAPDH; the interaction is direct. Interacts with LIMK1 (via the PDZ domain); the interaction is direct. Interacts with LIMK2. Interacts with HDAC6; thereby inhibiting the tubulin deacetylase activity of HDAC6. Interacts with aggregated SNCA; may have a pro-aggregatory role in synucleinopathies. Interacts with DYNLL1. Interacts (via C-terminus) with S100A2, S100A6 and S100B; these interactions inhibit TPPP dimerization. Mg(2+) serves as cofactor. Post-translationally, phosphorylated by LIMK1 on serine residues; phosphorylation may alter the tubulin polymerization activity. Phosphorylation by LIMK2, but not LIMK1, regulates astral microtubule organization at early stage of mitosis. Phosphorylation by ROCK1 at Ser-31, Ser-106 and Ser-158 inhibits interaction with HDAC6, resulting in decreased acetylation of tubulin, increased cell motility and entry into S-phase. Phosphorylation by CDK1 inhibits the microtubule polymerizing activity. Degraded by the proteasome; zinc-binding inhibits degradation by the proteasome. Predominantly expressed in mature oligodendrocytes.

It localises to the golgi outpost. Its subcellular location is the cytoplasm. The protein localises to the cytoskeleton. It is found in the microtubule organizing center. The protein resides in the nucleus. It localises to the spindle. The catalysed reaction is GTP + H2O = GDP + phosphate + H(+). Its function is as follows. Regulator of microtubule dynamics that plays a key role in myelination by promoting elongation of the myelin sheath. Acts as a microtubule nucleation factor in oligodendrocytes: specifically localizes to the postsynaptic Golgi apparatus region, also named Golgi outpost, and promotes microtubule nucleation, an important step for elongation of the myelin sheath. Required for both uniform polarized growth of distal microtubules as well as directing the branching of proximal processes. Shows magnesium-dependent GTPase activity; the role of the GTPase activity is unclear. In addition to microtubule nucleation activity, also involved in microtubule bundling and stabilization of existing microtubules, thereby maintaining the integrity of the microtubule network. Regulates microtubule dynamics by promoting tubulin acetylation: acts by inhibiting the tubulin deacetylase activity of HDAC6. Also regulates cell migration: phosphorylation by ROCK1 inhibits interaction with HDAC6, resulting in decreased acetylation of tubulin and increased cell motility. Plays a role in cell proliferation by regulating the G1/S-phase transition. Involved in astral microtubule organization and mitotic spindle orientation during early stage of mitosis; this process is regulated by phosphorylation by LIMK2. The chain is Tubulin polymerization-promoting protein from Rattus norvegicus (Rat).